The chain runs to 727 residues: NADH-ubiquinone oxidoreductase 75 kDa subunit, mitochondrial (727 aa).

The transit peptide at M1–T23 directs the protein to the mitochondrion. The 79-residue stretch at N30–K108 folds into the 2Fe-2S ferredoxin-type domain. [2Fe-2S] cluster contacts are provided by C64, C75, and C78. K84 is subject to N6-acetyllysine. C92 is a [2Fe-2S] cluster binding site. The 4Fe-4S His(Cys)3-ligated-type domain maps to K108–G147. 8 residues coordinate [4Fe-4S] cluster: H124, C128, C131, C137, C176, C179, C182, and C226. A 4Fe-4S Mo/W bis-MGD-type domain is found at T245–R301. N6-acetyllysine occurs at positions 467, 499, and 709.

This sequence belongs to the complex I 75 kDa subunit family. Core subunit of respiratory chain NADH dehydrogenase (Complex I) which is composed of 45 different subunits. This is the largest subunit of complex I and it is a component of the iron-sulfur (IP) fragment of the enzyme. Complex I associates with ubiquinol-cytochrome reductase complex (Complex III) to form supercomplexes. Interacts with MDM2 and AKAP1. [2Fe-2S] cluster serves as cofactor. It depends on [4Fe-4S] cluster as a cofactor.

The protein resides in the mitochondrion inner membrane. It carries out the reaction a ubiquinone + NADH + 5 H(+)(in) = a ubiquinol + NAD(+) + 4 H(+)(out). Functionally, core subunit of the mitochondrial membrane respiratory chain NADH dehydrogenase (Complex I) which catalyzes electron transfer from NADH through the respiratory chain, using ubiquinone as an electron acceptor. Essential for catalysing the entry and efficient transfer of electrons within complex I. Plays a key role in the assembly and stability of complex I and participates in the association of complex I with ubiquinol-cytochrome reductase complex (Complex III) to form supercomplexes. In Pongo abelii (Sumatran orangutan), this protein is NADH-ubiquinone oxidoreductase 75 kDa subunit, mitochondrial (NDUFS1).